The primary structure comprises 157 residues: Ribonuclease H (157 aa).

An RNase H type-1 domain is found at 3-144 (NSKTVHLYTD…CDELARDAAT (142 aa)). 4 residues coordinate Mg(2+): Asp-12, Glu-50, Asp-72, and Asp-136.

This sequence belongs to the RNase H family. Monomer. Requires Mg(2+) as cofactor.

Its subcellular location is the cytoplasm. It catalyses the reaction Endonucleolytic cleavage to 5'-phosphomonoester.. Functionally, endonuclease that specifically degrades the RNA of RNA-DNA hybrids. This chain is Ribonuclease H, found in Idiomarina loihiensis (strain ATCC BAA-735 / DSM 15497 / L2-TR).